Here is a 273-residue protein sequence, read N- to C-terminus: Large ribosomal subunit protein uL2cz/uL2cy (273 aa).

Disordered regions lie at residues 1–20 (MAIHLYKTSTPSTRKGAVDS) and 224–254 (NPVDHPHGGGEGRAPIGRKKPTTPWGYPALG).

It belongs to the universal ribosomal protein uL2 family. As to quaternary structure, part of the 50S ribosomal subunit.

Its subcellular location is the plastid. The protein localises to the chloroplast. The sequence is that of Large ribosomal subunit protein uL2cz/uL2cy (rpl2-A) from Nuphar advena (Common spatterdock).